The following is a 147-amino-acid chain: MTSQPISNETIIMLPSNVINFSQAEKPEPTNQGQDSLKKRLQAKVKVIGVHSSLAGSILSALSALVGFILLSVNPAALNPASLQCKLDEKDIPTRLLLSYDYHSPYTMDCHRAKASLAGTLSLMLVSTVLEFCLAVLTAVLQWKQTV.

At 1–52 (MTSQPISNETIIMLPSNVINFSQAEKPEPTNQGQDSLKKRLQAKVKVIGVHS) the chain is on the cytoplasmic side. The chain crosses the membrane as a helical span at residues 53–73 (SLAGSILSALSALVGFILLSV). Topologically, residues 74-120 (NPAALNPASLQCKLDEKDIPTRLLLSYDYHSPYTMDCHRAKASLAGT) are extracellular. Residues 121–141 (LSLMLVSTVLEFCLAVLTAVL) form a helical membrane-spanning segment. Over 142 to 147 (QWKQTV) the chain is Cytoplasmic.

Belongs to the MS4A family. As to expression, expressed by malignant and fetal tissue at very low levels.

The protein localises to the membrane. In terms of biological role, may be involved in signal transduction as a component of a multimeric receptor complex. In Homo sapiens (Human), this protein is Membrane-spanning 4-domains subfamily A member 6E (MS4A6E).